The primary structure comprises 263 residues: Shikimate dehydrogenase (NADP(+)) (263 aa).

Shikimate contacts are provided by residues 21–23 (TLS) and threonine 67. Catalysis depends on lysine 71, which acts as the Proton acceptor. Position 83 (glutamate 83) interacts with NADP(+). 2 residues coordinate shikimate: asparagine 92 and aspartate 103. NADP(+) is bound by residues 126–130 (GAGGA) and leucine 204. Tyrosine 206 contributes to the shikimate binding site. Residue glycine 227 participates in NADP(+) binding.

It belongs to the shikimate dehydrogenase family. As to quaternary structure, homodimer.

The catalysed reaction is shikimate + NADP(+) = 3-dehydroshikimate + NADPH + H(+). The protein operates within metabolic intermediate biosynthesis; chorismate biosynthesis; chorismate from D-erythrose 4-phosphate and phosphoenolpyruvate: step 4/7. Functionally, involved in the biosynthesis of the chorismate, which leads to the biosynthesis of aromatic amino acids. Catalyzes the reversible NADPH linked reduction of 3-dehydroshikimate (DHSA) to yield shikimate (SA). In Sulfolobus acidocaldarius (strain ATCC 33909 / DSM 639 / JCM 8929 / NBRC 15157 / NCIMB 11770), this protein is Shikimate dehydrogenase (NADP(+)).